A 243-amino-acid chain; its full sequence is Zinc import ATP-binding protein ZnuC (243 aa).

The ABC transporter domain maps to isoleucine 4 to glycine 219. Residue glycine 36–threonine 43 participates in ATP binding.

This sequence belongs to the ABC transporter superfamily. Zinc importer (TC 3.A.1.15.5) family. As to quaternary structure, the complex is composed of two ATP-binding proteins (ZnuC), two transmembrane proteins (ZnuB) and a solute-binding protein (ZnuA).

The protein localises to the cell inner membrane. It carries out the reaction Zn(2+)(out) + ATP(in) + H2O(in) = Zn(2+)(in) + ADP(in) + phosphate(in) + H(+)(in). In terms of biological role, part of the ABC transporter complex ZnuABC involved in zinc import. Responsible for energy coupling to the transport system. This chain is Zinc import ATP-binding protein ZnuC, found in Jannaschia sp. (strain CCS1).